The sequence spans 131 residues: Rhodopsin (131 aa).

The Extracellular portion of the chain corresponds to 1–16 (CGIDYYTRAPGYNNES). N-linked (GlcNAc...) asparagine glycosylation is present at asparagine 14. A helical transmembrane segment spans residues 17–38 (FVIYMFIVHFLIPLFIISFCYG). The Cytoplasmic portion of the chain corresponds to 39 to 66 (NLLCAVKAAAAAQEESETTQRAEREVTR). Residues 67–88 (MVIMMVISYLVSWVPYASVAWY) form a helical membrane-spanning segment. Residues 89-100 (IFSNQGSEFGPV) lie on the Extracellular side of the membrane. The helical transmembrane segment at 101 to 122 (FMTIPAFFAKSSALYNPLIYVL) threads the bilayer. Lysine 110 carries the N6-(retinylidene)lysine modification. The Cytoplasmic segment spans residues 123-131 (MNKQFRHCM).

Belongs to the G-protein coupled receptor 1 family. Opsin subfamily. Post-translationally, phosphorylated on some or all of the serine and threonine residues present in the C-terminal region. Contains one covalently linked retinal chromophore.

Its subcellular location is the membrane. It is found in the cell projection. It localises to the cilium. The protein resides in the photoreceptor outer segment. In terms of biological role, photoreceptor required for image-forming vision at low light intensity. While most salt water fish species use retinal as chromophore, most freshwater fish use 3-dehydroretinal, or a mixture of retinal and 3-dehydroretinal. Light-induced isomerization of 11-cis to all-trans retinal triggers a conformational change that activates signaling via G-proteins. Subsequent receptor phosphorylation mediates displacement of the bound G-protein alpha subunit by arrestin and terminates signaling. The protein is Rhodopsin (rho) of Coregonus autumnalis (Arctic cisco).